Consider the following 353-residue polypeptide: Photosystem II D2 protein (353 aa).

An N-acetylthreonine modification is found at Thr-2. Phosphothreonine is present on Thr-2. A helical membrane pass occupies residues 41–61; it reads CAYFALGGWFTGTTFVTSWYT. His-118 serves as a coordination point for chlorophyll a. A helical membrane pass occupies residues 125 to 141; the sequence is GFMLRQFELARSVQLRP. Positions 130 and 143 each coordinate pheophytin a. Residues 153 to 166 form a helical membrane-spanning segment; it reads VFVSVFLIYPLGQS. His-198 provides a ligand contact to chlorophyll a. A helical transmembrane segment spans residues 208–228; that stretch reads AALLCAIHGATVENTLFEDGD. Positions 215 and 262 each coordinate a plastoquinone. His-215 provides a ligand contact to Fe cation. His-269 contacts Fe cation. The helical transmembrane segment at 279–295 threads the bilayer; it reads GLWMSALGVVGLALNLR.

Belongs to the reaction center PufL/M/PsbA/D family. PSII is composed of 1 copy each of membrane proteins PsbA, PsbB, PsbC, PsbD, PsbE, PsbF, PsbH, PsbI, PsbJ, PsbK, PsbL, PsbM, PsbT, PsbX, PsbY, PsbZ, Psb30/Ycf12, at least 3 peripheral proteins of the oxygen-evolving complex and a large number of cofactors. It forms dimeric complexes. The cofactor is The D1/D2 heterodimer binds P680, chlorophylls that are the primary electron donor of PSII, and subsequent electron acceptors. It shares a non-heme iron and each subunit binds pheophytin, quinone, additional chlorophylls, carotenoids and lipids. There is also a Cl(-1) ion associated with D1 and D2, which is required for oxygen evolution. The PSII complex binds additional chlorophylls, carotenoids and specific lipids..

It is found in the plastid. The protein localises to the chloroplast thylakoid membrane. The enzyme catalyses 2 a plastoquinone + 4 hnu + 2 H2O = 2 a plastoquinol + O2. Photosystem II (PSII) is a light-driven water:plastoquinone oxidoreductase that uses light energy to abstract electrons from H(2)O, generating O(2) and a proton gradient subsequently used for ATP formation. It consists of a core antenna complex that captures photons, and an electron transfer chain that converts photonic excitation into a charge separation. The D1/D2 (PsbA/PsbD) reaction center heterodimer binds P680, the primary electron donor of PSII as well as several subsequent electron acceptors. D2 is needed for assembly of a stable PSII complex. The chain is Photosystem II D2 protein from Pelargonium hortorum (Common geranium).